The primary structure comprises 100 residues: MNSYIREKVDEYRERYDLPDLKVTRSDKEGKRLKAVYTDKDGHRKKIYFGQEGAYTYADGAPDYVRNAYHARASGQYTKKGKQAISIPGSAASLSYNILW.

It localises to the virion. This is an uncharacterized protein from Acanthamoeba polyphaga mimivirus (APMV).